Here is a 704-residue protein sequence, read N- to C-terminus: DNA ligase (704 aa).

NAD(+) contacts are provided by residues 58–62 (DYEYD), 107–108 (SL), and glutamate 138. The active-site N6-AMP-lysine intermediate is lysine 140. Positions 161, 199, 323, and 347 each coordinate NAD(+). Cysteine 441, cysteine 444, cysteine 459, and cysteine 464 together coordinate Zn(2+). The 84-residue stretch at 621–704 (EKKGKLAGLN…LKLIGGENTE (84 aa)) folds into the BRCT domain.

The protein belongs to the NAD-dependent DNA ligase family. LigA subfamily. Mg(2+) is required as a cofactor. It depends on Mn(2+) as a cofactor.

The catalysed reaction is NAD(+) + (deoxyribonucleotide)n-3'-hydroxyl + 5'-phospho-(deoxyribonucleotide)m = (deoxyribonucleotide)n+m + AMP + beta-nicotinamide D-nucleotide.. DNA ligase that catalyzes the formation of phosphodiester linkages between 5'-phosphoryl and 3'-hydroxyl groups in double-stranded DNA using NAD as a coenzyme and as the energy source for the reaction. It is essential for DNA replication and repair of damaged DNA. The sequence is that of DNA ligase from Sulfurihydrogenibium sp. (strain YO3AOP1).